The primary structure comprises 444 residues: Zinc finger protein ZIC 1 (444 aa).

The segment at 222–257 adopts a C2H2-type 1 zinc-finger fold; that stretch reads LICKWIEPEQLANPKKSCNKTFSTMHELVTHVTVEH. The segment at 271 to 293 adopts a C2H2-type 2; degenerate zinc-finger fold; it reads EECPREGKPFKAKYKLVNHIRVH. C2H2-type zinc fingers lie at residues 299 to 323, 329 to 353, and 359 to 381; these read FPCP…KRTH, FKCE…MHVH, and YLCK…MKVH. The tract at residues 372–432 is disordered; that stretch reads SSLRKHMKVH…SSAGHHTASH (61 aa). Residues 383–432 show a composition bias toward low complexity; it reads SSSQGSQPSPAASSGYESSTPPTIVSPSTENQTASSLSPSSSAGHHTASH.

It belongs to the GLI C2H2-type zinc-finger protein family.

It is found in the nucleus. The protein resides in the cytoplasm. Functionally, acts as a transcriptional activator. Involved in neurogenesis. Plays important roles in the early stage of organogenesis of the CNS, as well as during dorsal spinal cord development and maturation of the cerebellum. Binds to the minimal GLI-consensus sequence 5'-TGGGTGGTC-3'. In Gallus gallus (Chicken), this protein is Zinc finger protein ZIC 1 (ZIC1).